The chain runs to 205 residues: Protein TGAM_1450 (205 aa).

The AMMECR1 domain occupies 7–201 (EWGEFLVRLA…EEYPRGPVRR (195 aa)).

This Thermococcus gammatolerans (strain DSM 15229 / JCM 11827 / EJ3) protein is Protein TGAM_1450.